An 87-amino-acid chain; its full sequence is Kappa-6-bungarotoxin (87 aa).

The first 21 residues, 1-21 (MKTLLLSLVVVTIVCLDLGYT), serve as a signal peptide directing secretion. 5 disulfides stabilise this stretch: Cys24/Cys42, Cys35/Cys63, Cys48/Cys52, Cys67/Cys79, and Cys80/Cys85.

Belongs to the three-finger toxin family. Long-chain subfamily. Kappa-neurotoxin sub-subfamily. Homo- and heterodimer; non-covalently linked. In terms of tissue distribution, expressed by the venom gland.

Its subcellular location is the secreted. In terms of biological role, postsynaptic neurotoxin that binds and inhibits neuronal nicotinic acetylcholine receptors (nAChR) with high affinity (IC(50)&lt;100 nM). Is a selective, and slowly reversible antagonist of alpha-3/CHRNA3-containing and some alpha-4/CHRNA4-containing AChRs. This is Kappa-6-bungarotoxin from Bungarus multicinctus (Many-banded krait).